The primary structure comprises 410 residues: Thyroid hormone receptor alpha (410 aa).

Residues 1-32 (MEQKPSKVECGSDPEESSTRSPDGKRKRKNGQ) form a disordered region. The segment at 1–52 (MEQKPSKVECGSDPEESSTRSPDGKRKRKNGQCSLKTSMSGYIPSYLDKDEQ) is modulating. Cys53, Cys56, Cys70, Cys73, Cys91, Cys97, Cys107, and Cys110 together coordinate Zn(2+). NR C4-type zinc fingers lie at residues 53–73 (CVVCGDKATGYHYRCITCEGC) and 91–115 (CKYDSCCVIDKITRNQCQLCRFKKC). Positions 53-127 (CVVCGDKATG…VGMAMDLVLD (75 aa)) form a DNA-binding region, nuclear receptor. The NR LBD domain occupies 163-407 (EEWDLIHVAT…PPLFLEVFED (245 aa)). 3,3',5-triiodo-L-thyronine contacts are provided by Arg228 and Ser277.

This sequence belongs to the nuclear hormone receptor family. NR1 subfamily. Binds DNA as a dimer; homodimer and heterodimer with RXRB. Interacts with NCOA3 and NCOA6 coactivators, leading to a strong increase of transcription of target genes. Probably interacts with SFPQ. Interacts with C1D. Interacts with AKAP13. Interacts with TP53INP2. Interacts with PER2. Interacts with TACC1. The interaction with isoform alpha-1, but not alpha-2, is decreased in the presence of thyroid hormone T3.

Its subcellular location is the nucleus. The protein resides in the cytoplasm. Its function is as follows. Nuclear hormone receptor that can act as a repressor or activator of transcription. High affinity receptor for thyroid hormones, including triiodothyronine and thyroxine. In Ovis aries (Sheep), this protein is Thyroid hormone receptor alpha (THRA).